We begin with the raw amino-acid sequence, 472 residues long: Glutamine synthetase (472 aa).

The region spanning 17 to 101 (NNVKFVLLRF…IRCSVYEPTT (85 aa)) is the GS beta-grasp domain. The region spanning 109–472 (PRSIAIRAEN…HPVEFEMYYA (364 aa)) is the GS catalytic domain. Residues glutamate 134 and glutamate 136 each contribute to the Mg(2+) site. Glutamate 212 serves as a coordination point for ATP. Mg(2+) is bound by residues glutamate 217 and glutamate 225. L-glutamate-binding positions include 269–270 (NG) and glycine 270. Histidine 274 is a Mg(2+) binding site. Residues 276–278 (NMS) and serine 278 each bind ATP. L-glutamate is bound by residues arginine 326, glutamate 332, and arginine 344. ATP contacts are provided by arginine 344, arginine 349, and lysine 357. Residue glutamate 362 participates in Mg(2+) binding. An L-glutamate-binding site is contributed by arginine 364. Residue tyrosine 402 is modified to O-AMP-tyrosine.

It belongs to the glutamine synthetase family. In terms of assembly, oligomer of 12 subunits arranged in the form of two hexameric ring. The cofactor is Mg(2+).

It localises to the cytoplasm. The enzyme catalyses L-glutamate + NH4(+) + ATP = L-glutamine + ADP + phosphate + H(+). Its activity is regulated as follows. The activity of this enzyme could be controlled by adenylation under conditions of abundant glutamine. Its function is as follows. Catalyzes the ATP-dependent biosynthesis of glutamine from glutamate and ammonia. This chain is Glutamine synthetase, found in Haemophilus influenzae (strain ATCC 51907 / DSM 11121 / KW20 / Rd).